The chain runs to 235 residues: MGDSQYSFSLTTFSPSGKLVQIEHALTAVGSGQTSLGIKAANGVVIATEKKLPSILVDETSVQKIQSLTPNIGVVYSGMGPDFRVLVRKSRKQAQQYYRLYKETIPVTQLVRETAAVMQEFTQSGGVRPFGVSLLIAGYDDNGPQLYQVDPSGSYFSWKASAMGKNVSNAKTFLEKRYTEDMELDDAIHTAILTLKEGYEGQISANNIEIGIIRSDREFKVLSPAEIKDFLEEVE.

Belongs to the peptidase T1A family. The 26S proteasome consists of a 20S proteasome core and two 19S regulatory subunits. The 20S proteasome core is composed of 28 subunits that are arranged in four stacked rings, resulting in a barrel-shaped structure. The two end rings are each formed by seven alpha subunits, and the two central rings are each formed by seven beta subunits. The catalytic chamber with the active sites is on the inside of the barrel.

The protein localises to the cytoplasm. It localises to the nucleus. The proteasome is a multicatalytic proteinase complex which is characterized by its ability to cleave peptides with Arg, Phe, Tyr, Leu, and Glu adjacent to the leaving group at neutral or slightly basic pH. The proteasome has an ATP-dependent proteolytic activity. In Oryza sativa subsp. indica (Rice), this protein is Proteasome subunit alpha type-2 (PAB1).